The sequence spans 370 residues: tRNA-specific 2-thiouridylase MnmA (370 aa).

ATP is bound by residues 24 to 31 (AMSGGVDS) and Leu50. Cys119 serves as the catalytic Nucleophile. Cys119 and Cys215 are oxidised to a cystine. Gly143 provides a ligand contact to ATP. An interaction with tRNA region spans residues 165 to 167 (KDQ). Cys215 acts as the Cysteine persulfide intermediate in catalysis.

This sequence belongs to the MnmA/TRMU family.

It localises to the cytoplasm. The enzyme catalyses S-sulfanyl-L-cysteinyl-[protein] + uridine(34) in tRNA + AH2 + ATP = 2-thiouridine(34) in tRNA + L-cysteinyl-[protein] + A + AMP + diphosphate + H(+). In terms of biological role, catalyzes the 2-thiolation of uridine at the wobble position (U34) of tRNA, leading to the formation of s(2)U34. The polypeptide is tRNA-specific 2-thiouridylase MnmA (Wolbachia sp. subsp. Drosophila simulans (strain wRi)).